The sequence spans 902 residues: Glutamate receptor 4 (902 aa).

An N-terminal signal peptide occupies residues 1–20 (MRIISRQIVLLFSGFWGLAM). At 22 to 544 (AFPSSVQIGG…GVFSFLDPLA (523 aa)) the chain is on the extracellular side. N-linked (GlcNAc...) asparagine glycans are attached at residues Asn52, Asn56, Asn258, Asn371, Asn407, and Asn414. The cysteines at positions 84 and 331 are disulfide-linked. 3 residues coordinate L-glutamate: Pro500, Thr502, and Arg507. A helical membrane pass occupies residues 545–565 (YEIWMCIVFAYIGVSVVLFLV). Over 566-592 (SRFSPYEWHTEEPEDGKEGPSDQPPNE) the chain is Cytoplasmic. The helical; Pore-forming intramembrane region spans 593-608 (FGIFNSLWFSLGAFMQ). The stretch at 609–611 (QGC) is an intramembrane region. Residue Cys611 is the site of S-palmitoyl cysteine attachment. Residues 612 to 617 (DISPRS) lie on the Cytoplasmic side of the membrane. Residues 618–638 (LSGRIVGGVWWFFTLIIISSY) form a helical membrane-spanning segment. Over 639–813 (TANLAAFLTV…DKTSALSLSN (175 aa)) the chain is Extracellular. 3 residues coordinate L-glutamate: Ser676, Thr677, and Glu727. A disulfide bridge links Cys740 with Cys795. Residues 814–834 (VAGVFYILVGGLGLAMLVALI) traverse the membrane as a helical segment. The Cytoplasmic portion of the chain corresponds to 835 to 902 (EFCYKSRAEA…GLAVIASDLP (68 aa)). Cys837 carries S-palmitoyl cysteine lipidation. Ser862 carries the phosphoserine; by PKC/PRKCG modification.

Belongs to the glutamate-gated ion channel (TC 1.A.10.1) family. GRIA4 subfamily. As to quaternary structure, homotetramer or heterotetramer of pore-forming glutamate receptor subunits. Tetramers may be formed by the dimerization of dimers. Interacts with EPB41L1 via its C-terminus. Isoform 3 interacts with PICK1. Found in a complex with GRIA1, GRIA2, GRIA3, CNIH2, CNIH3, CACNG2, CACNG3, CACNG4, CACNG5, CACNG7 and CACNG8. Interacts with CACNG5 and PRKCG. Found in a complex with GRIA1, GRIA2, GRIA3, DLG4, CACNG8 and CNIH2. Post-translationally, palmitoylated. Depalmitoylated upon L-glutamate stimulation. ZDHHC3/GODZ specifically palmitoylates Cys-611, which leads to Golgi retention and decreased cell surface expression. In contrast, Cys-837 palmitoylation does not affect cell surface expression but regulates stimulation-dependent endocytosis. Phosphorylated at Ser-862 by PRKCG; phosphorylation increases plasma membrane-associated GRI4 expression.

The protein resides in the cell membrane. The protein localises to the postsynaptic cell membrane. Its subcellular location is the cell projection. It is found in the dendrite. It catalyses the reaction Ca(2+)(in) = Ca(2+)(out). It carries out the reaction Na(+)(in) = Na(+)(out). The catalysed reaction is Mg(2+)(in) = Mg(2+)(out). Its function is as follows. Ionotropic glutamate receptor that functions as a ligand-gated cation channel, gated by L-glutamate and glutamatergic agonists such as alpha-amino-3-hydroxy-5-methyl-4-isoxazolepropionic acid (AMPA), quisqualic acid, and kainic acid. L-glutamate acts as an excitatory neurotransmitter at many synapses in the central nervous system and plays an important role in fast excitatory synaptic transmission. Binding of the excitatory neurotransmitter L-glutamate induces a conformation change, leading to the opening of the cation channel, and thereby converts the chemical signal to an electrical impulse upon entry of monovalent and divalent cations such as sodium and calcium. The receptor then desensitizes rapidly and enters a transient inactive state, characterized by the presence of bound agonist. In the presence of CACNG8, shows resensitization which is characterized by a delayed accumulation of current flux upon continued application of L-glutamate. This chain is Glutamate receptor 4, found in Macaca fascicularis (Crab-eating macaque).